Consider the following 348-residue polypeptide: 5-deoxyribose 1-phosphate isomerase (348 aa).

Residues 49–51 (RGA), arginine 92, and glutamine 199 contribute to the substrate site. Aspartate 240 functions as the Proton donor in the catalytic mechanism. Position 250–251 (250–251 (NK)) interacts with substrate.

Belongs to the EIF-2B alpha/beta/delta subunits family. DrdI subfamily. As to quaternary structure, homodimer.

It carries out the reaction 5-deoxy-alpha-D-ribose 1-phosphate = 5-deoxy-D-ribulose 1-phosphate. The catalysed reaction is 5-(methylsulfanyl)-alpha-D-ribose 1-phosphate = 5-(methylsulfanyl)-D-ribulose 1-phosphate. It functions in the pathway carbohydrate degradation. Catalyzes the isomerization of 5-deoxy-alpha-D-ribose 1-phosphate to 5-deoxy-D-ribulose 1-phosphate, as part of a 5-deoxyribose salvage pathway that recycles this toxic radical SAM enzyme by-product to mainstream metabolites. Also seems to be able to catalyze the conversion of methylthioribose-1-phosphate (MTR-1-P) into methylthioribulose-1-phosphate (MTRu-1-P). However this enzyme may not function in methionine salvage in B.thuringiensis since it exists a paralog (MtnA) present in the methionine salvage pathway cluster. The polypeptide is 5-deoxyribose 1-phosphate isomerase (Bacillus thuringiensis serovar kurstaki (strain ATCC 35866 / NRRL B-4488 / HD73)).